We begin with the raw amino-acid sequence, 345 residues long: Eukaryotic translation initiation factor 3 subunit F (345 aa).

The MPN domain occupies 30-166 (VVIQPQAIFS…TRAYISAPVG (137 aa)). The disordered stretch occupies residues 310 to 345 (EGASAEAGAQRGQRGGRGGRGGQQRTQERASEEVRA). Over residues 312–321 (ASAEAGAQRG) the composition is skewed to low complexity. Over residues 322 to 331 (QRGGRGGRGG) the composition is skewed to gly residues. Positions 335–345 (TQERASEEVRA) are enriched in basic and acidic residues.

Belongs to the eIF-3 subunit F family. As to quaternary structure, component of the eukaryotic translation initiation factor 3 (eIF-3) complex.

The protein resides in the cytoplasm. Its function is as follows. Component of the eukaryotic translation initiation factor 3 (eIF-3) complex, which is involved in protein synthesis of a specialized repertoire of mRNAs and, together with other initiation factors, stimulates binding of mRNA and methionyl-tRNAi to the 40S ribosome. The eIF-3 complex specifically targets and initiates translation of a subset of mRNAs involved in cell proliferation. This Neosartorya fischeri (strain ATCC 1020 / DSM 3700 / CBS 544.65 / FGSC A1164 / JCM 1740 / NRRL 181 / WB 181) (Aspergillus fischerianus) protein is Eukaryotic translation initiation factor 3 subunit F.